The chain runs to 126 residues: Pancreatic polypeptide prohormone (126 aa).

A signal peptide spans 1–26 (MTATRCCLWLLLLGTCMALLLPEAWG). Y62 carries the tyrosine amide modification. Positions 77-126 (RQSHAAAPGGSHRHPPAGLPAAKGGTGVSGSPPKPWDCLPCRAHSLPSQS) are disordered.

This sequence belongs to the NPY family. No icosapeptide-like peptide is cleaved from the C-terminal.

It is found in the secreted. Functionally, hormone secreted by pancreatic cells that acts as a regulator of pancreatic and gastrointestinal functions probably by signaling through the G protein-coupled receptor NPY4R2. The polypeptide is Pancreatic polypeptide prohormone (PPY) (Cavia porcellus (Guinea pig)).